A 198-amino-acid chain; its full sequence is Guanine nucleotide-binding protein subunit alpha-11 (198 aa).

Residues 1–11 form a G1 motif region; it reads LLGTGESGKST. Residues 1–198 form the G-alpha domain; the sequence is LLGTGESGKS…LSEYDHVLVE (198 aa). GTP-binding positions include 3–10 and 137–140; these read GTGESGKS and LRVR. S10 serves as a coordination point for Mg(2+). The segment at 135–143 is G2 motif; that stretch reads DVLRVRVPT. Mg(2+) is bound at residue T143. Residues 158–167 form a G3 motif region; the sequence is FRMVDVGGQR.

This sequence belongs to the G-alpha family. G(q) subfamily. In terms of assembly, g proteins are composed of 3 units; alpha, beta and gamma. The alpha chain contains the guanine nucleotide binding site. Interacts with RGS22. Interacts with NTSR1.

It is found in the cell membrane. It localises to the cytoplasm. The catalysed reaction is GTP + H2O = GDP + phosphate + H(+). Guanine nucleotide-binding proteins (G proteins) function as transducers downstream of G protein-coupled receptors (GPCRs) in numerous signaling cascades. The alpha chain contains the guanine nucleotide binding site and alternates between an active, GTP-bound state and an inactive, GDP-bound state. Signaling by an activated GPCR promotes GDP release and GTP binding. The alpha subunit has a low GTPase activity that converts bound GTP to GDP, thereby terminating the signal. Both GDP release and GTP hydrolysis are modulated by numerous regulatory proteins. Signaling is mediated via phospholipase C-beta-dependent inositol lipid hydrolysis for signal propagation: activates phospholipase C-beta: following GPCR activation, GNA11 activates PLC-beta (PLCB1, PLCB2, PLCB3 or PLCB4), leading to production of diacylglycerol (DAG) and inositol 1,4,5-trisphosphate (IP3). Transduces FFAR4 signaling in response to long-chain fatty acids (LCFAs). Together with GNAQ, required for heart development. In the respiratory epithelium, transmits OXGR1-dependent signals that lead to downstream intracellular Ca(2+) release and mucocilliary clearance of airborne pathogens. This chain is Guanine nucleotide-binding protein subunit alpha-11 (GNA11), found in Canis lupus familiaris (Dog).